The chain runs to 584 residues: AAA ATPase forming ring-shaped complexes (584 aa).

Residues 10–96 (AQSGTEHAEQ…LKENLDAVTH (87 aa)) are a coiled coil. Residues 40-66 (HQLQSAQRHAAGLSERRRAAEAQTQTA) are disordered. Residue 292–297 (GTGKTM) coordinates ATP.

This sequence belongs to the AAA ATPase family. In terms of assembly, homohexamer. Assembles into a hexameric ring structure.

This is AAA ATPase forming ring-shaped complexes from Micrococcus luteus (strain ATCC 4698 / DSM 20030 / JCM 1464 / CCM 169 / CCUG 5858 / IAM 1056 / NBRC 3333 / NCIMB 9278 / NCTC 2665 / VKM Ac-2230) (Micrococcus lysodeikticus).